The primary structure comprises 599 residues: Elongation factor 4 (599 aa).

A tr-type G domain is found at 2-184 (KNIRNFSIIA…RLVRDIPPPE (183 aa)). GTP contacts are provided by residues 14–19 (DHGKST) and 131–134 (NKID).

The protein belongs to the TRAFAC class translation factor GTPase superfamily. Classic translation factor GTPase family. LepA subfamily.

The protein resides in the cell inner membrane. The enzyme catalyses GTP + H2O = GDP + phosphate + H(+). Required for accurate and efficient protein synthesis under certain stress conditions. May act as a fidelity factor of the translation reaction, by catalyzing a one-codon backward translocation of tRNAs on improperly translocated ribosomes. Back-translocation proceeds from a post-translocation (POST) complex to a pre-translocation (PRE) complex, thus giving elongation factor G a second chance to translocate the tRNAs correctly. Binds to ribosomes in a GTP-dependent manner. The sequence is that of Elongation factor 4 from Escherichia fergusonii (strain ATCC 35469 / DSM 13698 / CCUG 18766 / IAM 14443 / JCM 21226 / LMG 7866 / NBRC 102419 / NCTC 12128 / CDC 0568-73).